The chain runs to 148 residues: MTPELNLKSLGAKTPYIFEYNSDLLEAFPNPNPNLDPLITLECKEFTSLCPITSQPDFGVIFIRYIPKDKMVESKSLKLYLFSYRNHGSFHESCINTILLDLVQLLEPKYLEVYGDFASRGGIAIKPFVNYAIKEYQEFKEKRLLNAK.

The active-site Thioimide intermediate is C50. The active-site Proton donor is the D57. Residues 72–74 (VES) and 91–92 (HE) each bind substrate.

It belongs to the GTP cyclohydrolase I family. QueF type 1 subfamily.

Its subcellular location is the cytoplasm. It carries out the reaction 7-aminomethyl-7-carbaguanine + 2 NADP(+) = 7-cyano-7-deazaguanine + 2 NADPH + 3 H(+). The protein operates within tRNA modification; tRNA-queuosine biosynthesis. Catalyzes the NADPH-dependent reduction of 7-cyano-7-deazaguanine (preQ0) to 7-aminomethyl-7-deazaguanine (preQ1). This chain is NADPH-dependent 7-cyano-7-deazaguanine reductase, found in Helicobacter pylori (strain G27).